The following is a 773-amino-acid chain: Transducin-like enhancer protein 4 (773 aa).

Disordered stretches follow at residues 1-22 (MIRDLSKMYPQTRHPAPHQPAQ), 140-162 (HGHGLPVPLTPHPSGLQPPAIPP), and 182-360 (LPIK…ASSL). Residues 1-136 (MIRDLSKMYP…AIIGQQLQAQ (136 aa)) form a q domain region. The segment at 137-204 (HLSHGHGLPV…HQRDRDSIKS (68 aa)) is GP domain. Residues 183–202 (PIKDEKKHHDNDHQRDRDSI) are compositionally biased toward basic and acidic residues. Low complexity predominate over residues 203-212 (KSSSVSPSAS). The segment at 205-274 (SSVSPSASFR…SPRGSPAHSP (70 aa)) is ccN domain. Phosphoserine occurs at positions 208, 212, and 222. Residues 215-252 (GAEKHRNSADYSSESKKQKTEEKEIAARYDSDGEKSDD) are compositionally biased toward basic and acidic residues. Lysine 237 is modified (N6-acetyllysine). Serine 245, serine 250, serine 269, and serine 273 each carry phosphoserine. Basic and acidic residues predominate over residues 273-289 (SPRENGLDKTRLLKKDA). The SP domain stretch occupies residues 275–452 (RENGLDKTRL…PGGKPAYSFH (178 aa)). An N6-acetyllysine modification is found at lysine 281. Positions 290 to 305 (PISPASIASSSSTPSS) are enriched in low complexity. Serine 292 bears the Phosphoserine mark. Over residues 317 to 328 (TTPVSKSNTPTP) the composition is skewed to polar residues. At threonine 318 the chain carries Phosphothreonine. A phosphoserine mark is found at serine 321 and serine 323. A phosphothreonine mark is found at threonine 325, threonine 327, threonine 334, and threonine 340. Residue serine 419 is modified to Phosphoserine. WD repeat units lie at residues 485-523 (NHGEVVCAVTISNPTRHVYTGGKGCVKVWDISHPGNKSP), 531-570 (NRDNYIRSCRLLPDGRTLIVGGEASTLSIWDLAAPTPRIK), 575-614 (SSAPACYALAISPDSKVCFSCCSDGNIAVWDLHNQTLVRQ), 617-656 (GHTDGASCIDISNDGTKLWTGGLDNTVRSWDLREGRQLQQ), 658-697 (DFTSQIFSLGYCPTGEWLAVGMENSNVEVLHVTKPDKYQL), 699-738 (LHESCVLSLKFAHCGKWFVSTGKDNLLNAWRTPYGASIFQ), and 740-773 (KESSSVLSCDISVDDKYIVTGSGDKKATVYEVIY).

The protein belongs to the WD repeat Groucho/TLE family. In terms of assembly, homooligomer and heterooligomer with other family members. Interacts with PAX5. Interacts with LEF1, TCF7, TCF7L1 and TCF7L2. Interacts with ZNF703; TLE4 may mediate ZNF703 transcriptional repression. Interacts with SIX3 and SIX6. Interacts with PAX2. Interacts with TLE1. In terms of processing, phosphorylated. PAX5 binding increases phosphorylation. Ubiquitinated by XIAP/BIRC4. In all tissues examined, mostly in brain, and muscle.

It localises to the nucleus. Transcriptional corepressor that binds to a number of transcription factors. Inhibits the transcriptional activation mediated by PAX5, and by CTNNB1 and TCF family members in Wnt signaling. The effects of full-length TLE family members may be modulated by association with dominant-negative AES. Essential for the transcriptional repressor activity of SIX3 during retina and lens development and for SIX3 transcriptional auto-repression. Involved in transcriptional repression of GNRHR and enhances MSX1-mediated transcriptional repression of CGA/alpha-GSU. This is Transducin-like enhancer protein 4 (TLE4) from Homo sapiens (Human).